A 627-amino-acid chain; its full sequence is tRNA uridine 5-carboxymethylaminomethyl modification enzyme MnmG (627 aa).

FAD-binding positions include 13–18, valine 125, and serine 180; that span reads GGGHAG. An NAD(+)-binding site is contributed by 274–288; the sequence is GPRYCPSIEDKVVRF. Glutamine 371 serves as a coordination point for FAD.

Belongs to the MnmG family. As to quaternary structure, homodimer. Heterotetramer of two MnmE and two MnmG subunits. FAD serves as cofactor.

It localises to the cytoplasm. Its function is as follows. NAD-binding protein involved in the addition of a carboxymethylaminomethyl (cmnm) group at the wobble position (U34) of certain tRNAs, forming tRNA-cmnm(5)s(2)U34. This Francisella tularensis subsp. holarctica (strain FTNF002-00 / FTA) protein is tRNA uridine 5-carboxymethylaminomethyl modification enzyme MnmG.